We begin with the raw amino-acid sequence, 753 residues long: Polyribonucleotide nucleotidyltransferase (753 aa).

Mg(2+) contacts are provided by aspartate 488 and aspartate 494. The KH domain maps to 555 to 614; that stretch reads PKLYTMKINPEKIRDVIGKGGSTIRALTEETGTQIDIGEDGTITIASSDAAKADEAKRRI. Residues 624–692 enclose the S1 motif domain; sequence GKIYEGPVTK…EKGRVKLSLK (69 aa). The interval 692–753 is disordered; the sequence is KALTERPAGM…EGEQQQQQQQ (62 aa). The segment covering 699-739 has biased composition (basic and acidic residues); the sequence is AGMERSDRPAPAEREFRQPREPRQQREFREPREPREPRDGG.

It belongs to the polyribonucleotide nucleotidyltransferase family. Requires Mg(2+) as cofactor.

It localises to the cytoplasm. The catalysed reaction is RNA(n+1) + phosphate = RNA(n) + a ribonucleoside 5'-diphosphate. Its function is as follows. Involved in mRNA degradation. Catalyzes the phosphorolysis of single-stranded polyribonucleotides processively in the 3'- to 5'-direction. This is Polyribonucleotide nucleotidyltransferase from Delftia acidovorans (strain DSM 14801 / SPH-1).